The following is a 614-amino-acid chain: MYPLLDRIEIPAQLRTLKRNQLPQLADELRNFLVESVAGTGGHLSSNLGTVELTIALHYVFDTPFDRLIWDVGHQTYAHKILTGRRTGMARLRMQGGIAGFPRRDESEYDAFGTAHSSTSISAALGMAVAARLKGVKQHAIAVIGDGAMSAGMAFEALNNAGVMDANLLVILNDNDMSISPPVGALNNYLAKLMSGRFYATARRAGEKMLGVVPPVLELAKRAEEHVKGMVTPSTLFEEFGFNYIGPIDGHDLDILLTTLNNIKQLDGPQFLHVVTRKGKGYKQAEEDPILYHGVGKFQPDQGIVSKPSAKLAYTQIFGDWLCDMAAKDSRLIGITPAMREGSGLVRFSKEYPDRYFDVGIAEQHAVTFAAGAACEGLKPVVAIYSTFLQRAYDQLIHDVAIQNLPVVFAIDRAGLVGADGPTHAGSFDLSYLRCIPNITVMTPADENECRQMLYTAFQLDTPAAVRYPRGSGPGVQIQQEMQTIPLGKGEIRRQGKQIALLAFGSMLTPCLEAGDELDATVVNMRFVKPLDQELVATLAAEHELLVTIEENTIMGGAGSAVMESLSSLDKNVRLLQLGLPDSFIDQGDPAHMLSDCGLDKAGIIQSIKERFSL.

Thiamine diphosphate-binding positions include H74 and 115 to 117; that span reads AHS. D146 is a binding site for Mg(2+). Thiamine diphosphate is bound by residues 147–148, N175, Y282, and E363; that span reads GA. N175 contributes to the Mg(2+) binding site.

This sequence belongs to the transketolase family. DXPS subfamily. As to quaternary structure, homodimer. Requires Mg(2+) as cofactor. The cofactor is thiamine diphosphate.

It carries out the reaction D-glyceraldehyde 3-phosphate + pyruvate + H(+) = 1-deoxy-D-xylulose 5-phosphate + CO2. Its pathway is metabolic intermediate biosynthesis; 1-deoxy-D-xylulose 5-phosphate biosynthesis; 1-deoxy-D-xylulose 5-phosphate from D-glyceraldehyde 3-phosphate and pyruvate: step 1/1. Catalyzes the acyloin condensation reaction between C atoms 2 and 3 of pyruvate and glyceraldehyde 3-phosphate to yield 1-deoxy-D-xylulose-5-phosphate (DXP). This is 1-deoxy-D-xylulose-5-phosphate synthase from Nitrosomonas europaea (strain ATCC 19718 / CIP 103999 / KCTC 2705 / NBRC 14298).